Here is a 324-residue protein sequence, read N- to C-terminus: Probable pectinesterase A (324 aa).

The N-terminal stretch at 1–19 (MHGSLLKLALLSFSLGSSA) is a signal peptide. A substrate-binding site is contributed by Gln142. Asp165 acts as the Proton donor in catalysis. Asp186 (nucleophile) is an active-site residue. Positions 246 and 248 each coordinate substrate. N-linked (GlcNAc...) asparagine glycosylation is present at Asn285.

This sequence belongs to the pectinesterase family.

It is found in the secreted. It carries out the reaction [(1-&gt;4)-alpha-D-galacturonosyl methyl ester](n) + n H2O = [(1-&gt;4)-alpha-D-galacturonosyl](n) + n methanol + n H(+). Its pathway is glycan metabolism; pectin degradation; 2-dehydro-3-deoxy-D-gluconate from pectin: step 1/5. In terms of biological role, involved in maceration and soft-rotting of plant tissue. This chain is Probable pectinesterase A (pmeA), found in Aspergillus oryzae (strain ATCC 42149 / RIB 40) (Yellow koji mold).